Consider the following 167-residue polypeptide: Zymogen granule membrane protein 16 (167 aa).

The signal sequence occupies residues 1–16; sequence MLTVALLALLCASASG. Positions 24–159 constitute a Jacalin-type lectin domain; sequence SSYSGEYGGG…IDAIGLHWDV (136 aa).

The protein belongs to the jacalin lectin family. In terms of tissue distribution, highly expressed in liver. Detected at lower levels in colon, ileum and jejunum.

Its subcellular location is the secreted. The protein resides in the extracellular space. The protein localises to the extracellular matrix. It is found in the zymogen granule lumen. It localises to the golgi apparatus lumen. May play a role in protein trafficking. May act as a linker molecule between the submembranous matrix on the luminal side of zymogen granule membrane (ZGM) and aggregated secretory proteins during granule formation in the TGN. This is Zymogen granule membrane protein 16 (ZG16) from Homo sapiens (Human).